The primary structure comprises 355 residues: DNA polymerase IV (355 aa).

A UmuC domain is found at 7 to 188; that stretch reads IIHIDMDCFY…LPVRKLFGVG (182 aa). Mg(2+) contacts are provided by Asp11 and Asp106. Glu107 is an active-site residue.

The protein belongs to the DNA polymerase type-Y family. In terms of assembly, monomer. Requires Mg(2+) as cofactor.

Its subcellular location is the cytoplasm. It carries out the reaction DNA(n) + a 2'-deoxyribonucleoside 5'-triphosphate = DNA(n+1) + diphosphate. Its function is as follows. Poorly processive, error-prone DNA polymerase involved in untargeted mutagenesis. Copies undamaged DNA at stalled replication forks, which arise in vivo from mismatched or misaligned primer ends. These misaligned primers can be extended by PolIV. Exhibits no 3'-5' exonuclease (proofreading) activity. May be involved in translesional synthesis, in conjunction with the beta clamp from PolIII. This is DNA polymerase IV from Legionella pneumophila (strain Lens).